The following is a 582-amino-acid chain: Probable DNA ligase (582 aa).

E243 serves as a coordination point for ATP. The N6-AMP-lysine intermediate role is filled by K245. Positions 250, 265, 295, 335, 410, and 416 each coordinate ATP.

Belongs to the ATP-dependent DNA ligase family. The cofactor is Mg(2+).

The enzyme catalyses ATP + (deoxyribonucleotide)n-3'-hydroxyl + 5'-phospho-(deoxyribonucleotide)m = (deoxyribonucleotide)n+m + AMP + diphosphate.. DNA ligase that seals nicks in double-stranded DNA during DNA replication, DNA recombination and DNA repair. This chain is Probable DNA ligase, found in Dictyoglomus thermophilum (strain ATCC 35947 / DSM 3960 / H-6-12).